The sequence spans 65 residues: Large ribosomal subunit protein bL35 (65 aa).

This sequence belongs to the bacterial ribosomal protein bL35 family.

The chain is Large ribosomal subunit protein bL35 from Photorhabdus laumondii subsp. laumondii (strain DSM 15139 / CIP 105565 / TT01) (Photorhabdus luminescens subsp. laumondii).